The following is a 359-amino-acid chain: Molybdenum import ATP-binding protein ModC (359 aa).

Residues 1-233 (MSGLTVSIRG…IDAESEGGGV (233 aa)) enclose the ABC transporter domain. Position 32–39 (32–39 (GHSGAGKT)) interacts with ATP. Positions 289-355 (AISIRNLLPV…VKAVSVDRAA (67 aa)) constitute a Mop domain.

It belongs to the ABC transporter superfamily. Molybdate importer (TC 3.A.1.8) family. As to quaternary structure, the complex is composed of two ATP-binding proteins (ModC), two transmembrane proteins (ModB) and a solute-binding protein (ModA).

It is found in the cell inner membrane. It catalyses the reaction molybdate(out) + ATP + H2O = molybdate(in) + ADP + phosphate + H(+). In terms of biological role, part of the ABC transporter complex ModABC involved in molybdenum import. Responsible for energy coupling to the transport system. This Brucella melitensis biotype 1 (strain ATCC 23456 / CCUG 17765 / NCTC 10094 / 16M) protein is Molybdenum import ATP-binding protein ModC.